Here is a 917-residue protein sequence, read N- to C-terminus: Major intrinsically disordered Notch2-binding receptor 1 (917 aa).

Over 1-892 (MEANQEASLF…AEFRRAKVCK (892 aa)) the chain is Cytoplasmic. Disordered stretches follow at residues 337–367 (STYF…WPAK), 389–410 (SEEK…GPDR), 457–476 (DKSI…SVGT), 568–588 (ITNG…NVHH), 652–679 (SEAP…LENS), 706–727 (TRPS…IASI), and 746–783 (NEEE…LPKQ). Residues 460-476 (ISCTSGQHSSDTSSVGT) show a composition bias toward polar residues. The span at 576 to 588 (KGDKCNRPENVHH) shows a compositional bias: basic and acidic residues. S712 carries the post-translational modification Phosphoserine. A helical transmembrane segment spans residues 893-913 (IAALITAAACTVILVIVVPIC). Topologically, residues 914-917 (TMKS) are extracellular.

This sequence belongs to the MINAR family. In terms of assembly, interacts with NOTCH2; this interaction increases MINAR1 stability. Interacts (via N-terminus) with DEPTOR (via PDZ domain); this interaction may stabilize DEPTOR protein by impairing its ubiquitination.

It is found in the cell membrane. In terms of biological role, intrinsically disordered protein which may negatively regulate mTOR signaling pathway by stabilizing the mTOR complex component DEPTOR. Negatively regulates angiogenesis. Negatively regulates cell growth. Negatively regulates neurite outgrowth in hippocampal neurons. This is Major intrinsically disordered Notch2-binding receptor 1 (Minar1) from Rattus norvegicus (Rat).